We begin with the raw amino-acid sequence, 557 residues long: Protein PECTIC ARABINOGALACTAN SYNTHESIS-RELATED (557 aa).

The disordered stretch occupies residues 1-54; the sequence is MAELRHSSSLGSRSSSSPLRAAGDEDSSSPHVHDHSPNGGDDEDGRPRHPSRDR. Residues 1-79 are Cytoplasmic-facing; it reads MAELRHSSSL…DPRVSPQKNK (79 aa). The span at 7 to 20 shows a compositional bias: low complexity; it reads SSSLGSRSSSSPLR. Residues 45 to 54 show a composition bias toward basic and acidic residues; sequence GRPRHPSRDR. Residues 80–100 traverse the membrane as a helical; Signal-anchor for type II membrane protein segment; the sequence is ISLLLILILAIASLISVYGII. Topologically, residues 101–557 are lumenal; the sequence is NHLNAPYLCK…NPLTPCMCKA (457 aa). Asparagine 156, asparagine 188, and asparagine 324 each carry an N-linked (GlcNAc...) asparagine glycan. 336-338 provides a ligand contact to substrate; it reads HLR. Asparagine 375 is a glycosylation site (N-linked (GlcNAc...) asparagine).

Belongs to the glycosyltransferase GT106 family. In terms of tissue distribution, widely expressed with the highest expression in reproductive tissues and roots.

It is found in the golgi apparatus membrane. Its pathway is glycan metabolism; pectin biosynthesis. Its function is as follows. Glycosyltransferase involved in the biosynthesis of pectic type-II arabinogalactans. This Arabidopsis thaliana (Mouse-ear cress) protein is Protein PECTIC ARABINOGALACTAN SYNTHESIS-RELATED.